We begin with the raw amino-acid sequence, 432 residues long: Homogentisate 1,2-dioxygenase (432 aa).

H287 serves as the catalytic Proton acceptor. Residues H330 and E336 each coordinate Fe cation. Y345 and H366 together coordinate homogentisate. Residue H366 participates in Fe cation binding.

This sequence belongs to the homogentisate dioxygenase family. As to quaternary structure, hexamer; dimer of trimers. Fe cation serves as cofactor.

The enzyme catalyses homogentisate + O2 = 4-maleylacetoacetate + H(+). The protein operates within amino-acid degradation; L-phenylalanine degradation; acetoacetate and fumarate from L-phenylalanine: step 4/6. In terms of biological role, involved in the catabolism of homogentisate (2,5-dihydroxyphenylacetate or 2,5-OH-PhAc), a central intermediate in the degradation of phenylalanine and tyrosine. Catalyzes the oxidative ring cleavage of the aromatic ring of homogentisate to yield maleylacetoacetate. The chain is Homogentisate 1,2-dioxygenase from Pseudomonas aeruginosa (strain ATCC 15692 / DSM 22644 / CIP 104116 / JCM 14847 / LMG 12228 / 1C / PRS 101 / PAO1).